Consider the following 131-residue polypeptide: ER membrane protein complex subunit 5 (131 aa).

Residues 1–3 (MAP) lie on the Cytoplasmic side of the membrane. Residues 4–22 (SLWKGLVGIGLFALAHAAF) traverse the membrane as a helical segment. Topologically, residues 23–43 (SAAQHRSYMRLTEKEDESLPI) are lumenal. The chain crosses the membrane as a helical span at residues 44–63 (DIVLQTLLAFAVTCYGIVHI). At 64–131 (AGEFKDMDAT…KLRKLESLRR (68 aa)) the chain is on the cytoplasmic side. Serine 120 carries the phosphoserine modification.

Belongs to the membrane magnesium transporter (TC 1.A.67) family. In terms of assembly, component of the ER membrane protein complex (EMC).

It is found in the endoplasmic reticulum membrane. The protein localises to the golgi apparatus membrane. Its subcellular location is the early endosome membrane. Functionally, part of the endoplasmic reticulum membrane protein complex (EMC) that enables the energy-independent insertion into endoplasmic reticulum membranes of newly synthesized membrane proteins. Preferentially accommodates proteins with transmembrane domains that are weakly hydrophobic or contain destabilizing features such as charged and aromatic residues. Involved in the cotranslational insertion of multi-pass membrane proteins in which stop-transfer membrane-anchor sequences become ER membrane spanning helices. It is also required for the post-translational insertion of tail-anchored/TA proteins in endoplasmic reticulum membranes. By mediating the proper cotranslational insertion of N-terminal transmembrane domains in an N-exo topology, with translocated N-terminus in the lumen of the ER, controls the topology of multi-pass membrane proteins like the G protein-coupled receptors. By regulating the insertion of various proteins in membranes, it is indirectly involved in many cellular processes. May be involved in Mg(2+) transport. This Homo sapiens (Human) protein is ER membrane protein complex subunit 5.